A 940-amino-acid polypeptide reads, in one-letter code: Serine/threonine-protein phosphatase 1 regulatory subunit 10 (940 aa).

The interaction with TOX4 stretch occupies residues 1–348; sequence MGSGPIDPKE…EPAPPSEAMD (348 aa). A TFIIS N-terminal domain is found at 73–147; that stretch reads KLLNNWLTYS…SDWMAVIRSQ (75 aa). 4 disordered regions span residues 147-211, 247-270, 304-400, and 533-905; these read QSST…FRST, SNVAAPGDATPPAEKKYKPLNTTP, KIKK…KSVT, and YVET…HGGD. Basic and acidic residues-rich tracts occupy residues 153–166 and 174–196; these read AEKDKKKRKDEGKS and PLTEVKAETRAEEAPEKKREKPK. Lys179 participates in a covalent cross-link: Glycyl lysine isopeptide (Lys-Gly) (interchain with G-Cter in SUMO2). Thr256 is modified (phosphothreonine). Lys262 is covalently cross-linked (Glycyl lysine isopeptide (Lys-Gly) (interchain with G-Cter in SUMO2)). Ser313 is modified (phosphoserine). Positions 325-336 are enriched in low complexity; the sequence is KTSTEPSTAKPS. The segment at 357–433 is necessary for interaction with PPP1CA; it reads PPVEVPELMD…NKIKDFGEAA (77 aa). Residue Ser382 is modified to Phosphoserine. The tract at residues 393–408 is necessary for interaction with PPP1CC; that stretch reads GRKRKSVTWPEEGKLR. The short motif at 394 to 423 is the PP1-binding motif element; the sequence is RKRKSVTWPEEGKLREYFYFELDETERVNV. Phosphoserine; by PKA is present on Ser398. An interaction with WDR82 region spans residues 418–619; that stretch reads TERVNVNKIK…IKQMLVPHGL (202 aa). Gly residues-rich tracts occupy residues 540–551 and 565–579; these read GGSGGSPDGAGG and MGAGKGPQGPGGGGI. Ser545 is subject to Phosphoserine. The span at 583–595 shows a compositional bias: polar residues; it reads EILTSIMGSPNSH. Ser591 is subject to Phosphoserine. Basic and acidic residues predominate over residues 596-611; it reads PSEELLKQPDYSDKIK. Residues 644 to 655 show a composition bias toward pro residues; the sequence is PPGPGGPMPGPH. Position 665 is an omega-N-methylarginine (Arg665). Residues 676 to 690 show a composition bias toward low complexity; it reads GDPFWDGPGDPMRGG. Arg693 carries the post-translational modification Omega-N-methylarginine. Over residues 714-723 the composition is skewed to pro residues; sequence EPPPPPPPPF. 2 stretches are compositionally biased toward gly residues: residues 726-764 and 790-845; these read ARGGRSGGGPPNGRGGPGGGMVGGGGHRPHEGPGGGMGN and SSMG…GSGG. At Arg739 the chain carries Omega-N-methylarginine. 2 stretches are compositionally biased toward basic and acidic residues: residues 862–886 and 894–903; these read PHDVPGHRGHDHRGPPHEHRGHDGP and RGHDGGHSHG. The C3H1-type zinc-finger motif lies at 906-934; that stretch reads MSNRPVCRHFMMKGNCRYENNCAFYHPGV.

Component of the PNUTS-PP1 complex (also named PTW/PP1 complex), composed of PPP1R10/PNUTS, TOX4, WDR82, and PPP1CA (or PPP1CB or PPP1CC). Post-translationally, phosphorylated on Ser-398 by PKA within the region necessary for interaction with PPP1CA.

It is found in the nucleus. It localises to the chromosome. Functionally, substrate-recognition component of the PNUTS-PP1 protein phosphatase complex, a protein phosphatase 1 (PP1) complex that promotes RNA polymerase II transcription pause-release, allowing transcription elongation. Promoter-proximal pausing by RNA polymerase II is a transcription halt following transcription initiation but prior to elongation, which acts as a checkpoint to control that transcripts are favorably configured for transcriptional elongation. The PNUTS-PP1 complex mediates the release of RNA polymerase II from promoter-proximal region of genes by catalyzing dephosphorylation of proteins involved in transcription, such as AFF4, CDK9, MEPCE, INTS12, NCBP1, POLR2M/GDOWN1 and SUPT6H. The PNUTS-PP1 complex also regulates RNA polymerase II transcription termination by mediating dephosphorylation of SUPT5H in termination zones downstream of poly(A) sites, thereby promoting deceleration of RNA polymerase II transcription. PNUTS-PP1 complex is also involved in the response to replication stress by mediating dephosphorylation of POLR2A at 'Ser-5' of the CTD, promoting RNA polymerase II degradation. The PNUTS-PP1 complex also plays a role in the control of chromatin structure and cell cycle progression during the transition from mitosis into interphase. PNUTS-PP1 complex mediates dephosphorylation of MYC, promoting MYC stability by preventing MYC ubiquitination by the SCF(FBXW7) complex. In addition to acts as a substrate-recognition component, PPP1R10/PNUTS also acts as a nuclear targeting subunit for the PNUTS-PP1 complex. In some context, PPP1R10/PNUTS also acts as an inhibitor of protein phosphatase 1 (PP1) activity by preventing access to substrates, such as RB. The chain is Serine/threonine-protein phosphatase 1 regulatory subunit 10 (PPP1R10) from Macaca mulatta (Rhesus macaque).